Here is a 405-residue protein sequence, read N- to C-terminus: Acetate kinase (405 aa).

Asn-7 serves as a coordination point for Mg(2+). ATP is bound at residue Lys-14. A substrate-binding site is contributed by Arg-99. Asp-156 (proton donor/acceptor) is an active-site residue. Residues 215-219 (HLGNG), 290-292 (DMR), and 338-342 (GVGEH) each bind ATP. Glu-391 is a Mg(2+) binding site.

It belongs to the acetokinase family. As to quaternary structure, homodimer. Requires Mg(2+) as cofactor. It depends on Mn(2+) as a cofactor.

Its subcellular location is the cytoplasm. The catalysed reaction is acetate + ATP = acetyl phosphate + ADP. It participates in metabolic intermediate biosynthesis; acetyl-CoA biosynthesis; acetyl-CoA from acetate: step 1/2. Its function is as follows. Catalyzes the formation of acetyl phosphate from acetate and ATP. Can also catalyze the reverse reaction. This is Acetate kinase from Nostoc punctiforme (strain ATCC 29133 / PCC 73102).